The sequence spans 569 residues: Laccase-6 (569 aa).

The signal sequence occupies residues 1–29 (MTSSAVPSLFRLSFLLFTLQVMNIGRIGA). Plastocyanin-like domains follow at residues 37–153 (KVQT…PKAS) and 163–315 (NEHT…YIGA). N-linked (GlcNAc...) asparagine glycosylation is present at N83. Cu cation contacts are provided by H87, H89, H132, and H134. Residues N208, N303, N319, N392, N438, and N444 are each glycosylated (N-linked (GlcNAc...) asparagine). The Plastocyanin-like 3 domain maps to 417 to 553 (DFPTTPEKAY…STMFIVKNGK (137 aa)). Cu cation is bound by residues H472, H475, H477, H532, C533, H534, H538, and M543.

The protein belongs to the multicopper oxidase family. Cu cation serves as cofactor. Predominantly expressed in the inflorescence stem, but not in siliques.

Its subcellular location is the secreted. It is found in the extracellular space. The protein localises to the apoplast. The enzyme catalyses 4 hydroquinone + O2 = 4 benzosemiquinone + 2 H2O. Its function is as follows. Lignin degradation and detoxification of lignin-derived products. The sequence is that of Laccase-6 (LAC6) from Arabidopsis thaliana (Mouse-ear cress).